A 568-amino-acid polypeptide reads, in one-letter code: NADPH oxidase 3 (568 aa).

Topologically, residues 1–13 (MMGCWILNEGLST) are cytoplasmic. Residues 14–34 (ILVLSWLGINFYLFIDTFYWY) traverse the membrane as a helical segment. Residues 35–51 (EEEESFHYTRVILGSTL) lie on the Extracellular side of the membrane. The chain crosses the membrane as a helical span at residues 52–72 (AWARASALCLNFNCMLILIPV). Residues 55–284 (RASALCLNFN…VVLYACERII (230 aa)) enclose the Ferric oxidoreductase domain. Residues 73-103 (SRNLISFIRGTSICCRGPWRRQLDKNLRFHK) are Cytoplasmic-facing. A helical membrane pass occupies residues 104-124 (LVAYGIAVNATIHIVAHFFNL). At 125–167 (ERYHWSQSEEAQGLLAALSKLGNTPNESYLNPVRTFPTNTTTE) the chain is on the extracellular side. N163 is a glycosylation site (N-linked (GlcNAc...) asparagine). A helical membrane pass occupies residues 168 to 188 (LLRTIAGVTGLVISLALVLIM). At 189-201 (TSSTEFIRQASYE) the chain is on the cytoplasmic side. The helical transmembrane segment at 202–222 (LFWYTHHVFIVFFLSLAIHGT) threads the bilayer. The Extracellular portion of the chain corresponds to 223-395 (GRIVRGQTQD…DGPFGTALTD (173 aa)). N238 carries N-linked (GlcNAc...) asparagine glycosylation. One can recognise an FAD-binding FR-type domain in the interval 285-395 (RFWRFQQEVV…DGPFGTALTD (111 aa)). The helical transmembrane segment at 396–416 (VFHYPVCVCVAAGIGVTPFAA) threads the bilayer. Over 417-568 (LLKSIWYKCS…VHFYYNKESF (152 aa)) the chain is Cytoplasmic.

As to quaternary structure, interacts with CYBA/p22phox. Heterodimerization with CYBA/p22phox is essential for its activity and cell membrane localization. Heme is required as a cofactor. In terms of processing, N-glycosylated in a CYBA/p22phox-dependent manner.

It is found in the cell membrane. The enzyme catalyses NADPH + 2 O2 = 2 superoxide + NADP(+) + H(+). Activated by the ototoxic drug cisplatin. Activated by NOXO1. Cooperatively activated by NCF1 and NCF2 or NOXA1 in a phorbol 12-myristate 13-acetate (PMA)-dependent manner. Inhibited by diphenyleneiodonium chloride. NADPH oxidase that catalyzes the generation of superoxide from molecular oxygen utilizing NADPH as an electron donor, upon formation of a complex with CYBA/p22phox. Plays a role in the biogenesis of otoconia/otolith, which are crystalline structures of the inner ear involved in the perception of gravity. This is NADPH oxidase 3 (NOX3) from Homo sapiens (Human).